An 87-amino-acid chain; its full sequence is Small ribosomal subunit protein bS20 (87 aa).

The tract at residues 1–26 is disordered; the sequence is MANIKSAKKRAIQSEKRRKHNASRRS.

Belongs to the bacterial ribosomal protein bS20 family.

Its function is as follows. Binds directly to 16S ribosomal RNA. The polypeptide is Small ribosomal subunit protein bS20 (Photorhabdus laumondii subsp. laumondii (strain DSM 15139 / CIP 105565 / TT01) (Photorhabdus luminescens subsp. laumondii)).